A 338-amino-acid polypeptide reads, in one-letter code: Homeobox protein ceh-20 (338 aa).

In terms of domain architecture, PBC spans Thr-4–Asp-187. The tract at residues Glu-11–Gly-91 is PBC-A. The tract at residues Gly-94–Asp-187 is PBC-B. Residues Ala-188 to Met-250 constitute a DNA-binding region (homeobox; TALE-type).

It belongs to the TALE/PBX homeobox family. As to quaternary structure, interacts with Meis protein psa-3. Interacts with homeobox protein nob-1. As to expression, expressed in head dopaminergic neurons.

The protein resides in the nucleus. Its function is as follows. Transcription factor that binds to the 5'-TGATNNAT(G/T)(G/A)-3' PBC/Hox lineage enhancer region of sem-2 to promote cell fate specification in the postembryonic mesoderm (also known as the M lineage). Required for the M lineage-specific expression of the transcription factor, mls-2. Required for asymmetric division of the T hypodermal cell, probably acting via the regulation of asymmetric expression of Meis protein psa-3 in concert with homeobox protein nob-1 and the Wnt-MAPK pathway. Has a role in the mig-13 pathway to promote the guidance, migration and positioning of Q neuroblasts and their descendants along the anteroposterior body axis and the anterior migration of BDU interneurons. Also required for normal vulval formation. Plays a role in regulating gene expression in dopaminergic neurons, acting in midbody PDE neurons, and acting redundantly with ceh-40 in head neurons. May activate dopamine pathway genes in concert with ETS domain-containing protein ast-1, and homeobox proteins ceh-43 and ceh-40. This chain is Homeobox protein ceh-20, found in Caenorhabditis elegans.